Reading from the N-terminus, the 460-residue chain is Cysteine--tRNA ligase (460 aa).

A Zn(2+)-binding site is contributed by Cys27. Residues 29–39 carry the 'HIGH' region motif; sequence PTVYDDAHLGH. Zn(2+) is bound by residues Cys202, His227, and Glu231. Residues 259–263 carry the 'KMSKS' region motif; the sequence is KMSKS. Lys262 contacts ATP.

The protein belongs to the class-I aminoacyl-tRNA synthetase family. Monomer. The cofactor is Zn(2+).

It is found in the cytoplasm. The catalysed reaction is tRNA(Cys) + L-cysteine + ATP = L-cysteinyl-tRNA(Cys) + AMP + diphosphate. This Campylobacter lari (strain RM2100 / D67 / ATCC BAA-1060) protein is Cysteine--tRNA ligase.